The chain runs to 376 residues: Multiphosphoryl transfer protein (376 aa).

One can recognise a PTS EIIA type-2 domain in the interval 2–142; sequence FQLSVQDIHP…EELRALLMGE (141 aa). H62 serves as the catalytic Tele-phosphohistidine intermediate; for EIIA activity. Phosphohistidine; by HPr is present on H62. The tract at residues 156 to 284 is m domain; sequence TLDVIASSLV…LTSDDALTDD (129 aa). In terms of domain architecture, HPr spans 285–375; sequence VLSAEFVVRN…DAIAAGLGEG (91 aa). H299 functions as the Pros-phosphohistidine intermediate; for HPr activity in the catalytic mechanism. A Phosphohistidine; by EI modification is found at H299.

Its subcellular location is the cytoplasm. In terms of biological role, the phosphoenolpyruvate-dependent sugar phosphotransferase system (sugar PTS), a major carbohydrate active transport system, catalyzes the phosphorylation of incoming sugar substrates concomitantly with their translocation across the cell membrane. The enzyme II FruAB PTS system is involved in fructose transport. The sequence is that of Multiphosphoryl transfer protein (fruB) from Salmonella typhimurium (strain LT2 / SGSC1412 / ATCC 700720).